The following is a 256-amino-acid chain: Hydroxyacylglutathione hydrolase (256 aa).

Residues His55, His57, Asp59, His60, His113, Asp132, and His170 each contribute to the Zn(2+) site.

It belongs to the metallo-beta-lactamase superfamily. Glyoxalase II family. In terms of assembly, monomer. Zn(2+) serves as cofactor.

The catalysed reaction is an S-(2-hydroxyacyl)glutathione + H2O = a 2-hydroxy carboxylate + glutathione + H(+). It participates in secondary metabolite metabolism; methylglyoxal degradation; (R)-lactate from methylglyoxal: step 2/2. In terms of biological role, thiolesterase that catalyzes the hydrolysis of S-D-lactoyl-glutathione to form glutathione and D-lactic acid. The sequence is that of Hydroxyacylglutathione hydrolase from Methylococcus capsulatus (strain ATCC 33009 / NCIMB 11132 / Bath).